The primary structure comprises 366 residues: Ribosomal RNA large subunit methyltransferase M (366 aa).

S-adenosyl-L-methionine-binding positions include S188, 221-224 (CPGG), D240, D260, and D277. Catalysis depends on K306, which acts as the Proton acceptor.

It belongs to the class I-like SAM-binding methyltransferase superfamily. RNA methyltransferase RlmE family. RlmM subfamily. In terms of assembly, monomer.

Its subcellular location is the cytoplasm. It catalyses the reaction cytidine(2498) in 23S rRNA + S-adenosyl-L-methionine = 2'-O-methylcytidine(2498) in 23S rRNA + S-adenosyl-L-homocysteine + H(+). In terms of biological role, catalyzes the 2'-O-methylation at nucleotide C2498 in 23S rRNA. The sequence is that of Ribosomal RNA large subunit methyltransferase M from Photorhabdus sp. (strain Az29).